The primary structure comprises 210 residues: Two-component response regulator ORR7 (210 aa).

The segment at 53–92 is disordered; it reads VVPLHDNASAEDDDDDEEDDDEDDDDDDDEDDEEEAAPPY. A compositionally biased stretch (acidic residues) spans 61 to 88; the sequence is SAEDDDDDEEDDDEDDDDDDDEDDEEEA. The region spanning 92 to 205 is the Response regulatory domain; the sequence is YVMAVDDSSV…VRPADISRIT (114 aa). Position 142 is a 4-aspartylphosphate (Asp-142).

The protein belongs to the ARR family. Type-A subfamily. Post-translationally, two-component system major event consists of a His-to-Asp phosphorelay between a sensor histidine kinase (HK) and a response regulator (RR). In plants, the His-to-Asp phosphorelay involves an additional intermediate named Histidine-containing phosphotransfer protein (HPt). This multistep phosphorelay consists of a His-Asp-His-Asp sequential transfer of a phosphate group between first a His and an Asp of the HK protein, followed by the transfer to a conserved His of the HPt protein and finally the transfer to an Asp in the receiver domain of the RR protein.

Functionally, functions as a response regulator involved in His-to-Asp phosphorelay signal transduction system. Phosphorylation of the Asp residue in the receiver domain activates the ability of the protein to promote the transcription of target genes. Type-A response regulators seem to act as negative regulators of the cytokinin signaling. The polypeptide is Two-component response regulator ORR7 (Oryza sativa subsp. japonica (Rice)).